Here is a 437-residue protein sequence, read N- to C-terminus: Protein translocase subunit SecY (437 aa).

10 helical membrane passes run 19–39 (LFTL…IPGV), 69–89 (LLQI…SIIL), 122–142 (VALA…GALF), 157–177 (IFTT…VMWL), 189–209 (GMSI…LWAI), 219–239 (WIEF…VVFV), 275–295 (GVIP…IVQF), 318–338 (HIIL…AISF), 378–398 (GSLY…GFGA), and 400–420 (QNFP…LETV).

It belongs to the SecY/SEC61-alpha family. As to quaternary structure, component of the Sec protein translocase complex. Heterotrimer consisting of SecY, SecE and SecG subunits. The heterotrimers can form oligomers, although 1 heterotrimer is thought to be able to translocate proteins. Interacts with the ribosome. Interacts with SecDF, and other proteins may be involved. Interacts with SecA.

It localises to the cell membrane. In terms of biological role, the central subunit of the protein translocation channel SecYEG. Consists of two halves formed by TMs 1-5 and 6-10. These two domains form a lateral gate at the front which open onto the bilayer between TMs 2 and 7, and are clamped together by SecE at the back. The channel is closed by both a pore ring composed of hydrophobic SecY resides and a short helix (helix 2A) on the extracellular side of the membrane which forms a plug. The plug probably moves laterally to allow the channel to open. The ring and the pore may move independently. The polypeptide is Protein translocase subunit SecY (Streptomyces lividans).